A 347-amino-acid chain; its full sequence is KIN17-like protein KLP (347 aa).

Positions 222–225 (KRKR) match the Nuclear localization signal (NLS) motif.

Belongs to the KIN17 family.

The protein resides in the cytoplasm. It localises to the nucleus. May act as repressor of root growth during copper excess and of hypocotyl growth in the dark. This is KIN17-like protein KLP from Arabidopsis thaliana (Mouse-ear cress).